The chain runs to 433 residues: 3-phosphoshikimate 1-carboxyvinyltransferase (433 aa).

The 3-phosphoshikimate site is built by Lys-23, Ser-24, and Arg-28. Position 23 (Lys-23) interacts with phosphoenolpyruvate. 2 residues coordinate phosphoenolpyruvate: Gly-95 and Arg-123. Positions 167, 169, 317, and 344 each coordinate 3-phosphoshikimate. A phosphoenolpyruvate-binding site is contributed by Gln-169. Asp-317 functions as the Proton acceptor in the catalytic mechanism. Residues Arg-348 and Arg-390 each contribute to the phosphoenolpyruvate site.

It belongs to the EPSP synthase family. In terms of assembly, monomer.

It is found in the cytoplasm. It catalyses the reaction 3-phosphoshikimate + phosphoenolpyruvate = 5-O-(1-carboxyvinyl)-3-phosphoshikimate + phosphate. Its pathway is metabolic intermediate biosynthesis; chorismate biosynthesis; chorismate from D-erythrose 4-phosphate and phosphoenolpyruvate: step 6/7. Catalyzes the transfer of the enolpyruvyl moiety of phosphoenolpyruvate (PEP) to the 5-hydroxyl of shikimate-3-phosphate (S3P) to produce enolpyruvyl shikimate-3-phosphate and inorganic phosphate. This is 3-phosphoshikimate 1-carboxyvinyltransferase from Staphylococcus epidermidis (strain ATCC 12228 / FDA PCI 1200).